The primary structure comprises 173 residues: Ribosome maturation factor RimM (173 aa).

The PRC barrel domain maps to 96–169 (PDEFYDHQLE…LITIDPPDGL (74 aa)).

The protein belongs to the RimM family. Binds ribosomal protein uS19.

The protein localises to the cytoplasm. An accessory protein needed during the final step in the assembly of 30S ribosomal subunit, possibly for assembly of the head region. Essential for efficient processing of 16S rRNA. May be needed both before and after RbfA during the maturation of 16S rRNA. It has affinity for free ribosomal 30S subunits but not for 70S ribosomes. The chain is Ribosome maturation factor RimM from Mycolicibacterium gilvum (strain PYR-GCK) (Mycobacterium gilvum (strain PYR-GCK)).